A 189-amino-acid chain; its full sequence is GTP cyclohydrolase 1 (189 aa).

The Zn(2+) site is built by cysteine 76, histidine 79, and cysteine 149.

It belongs to the GTP cyclohydrolase I family. Toroid-shaped homodecamer, composed of two pentamers of five dimers.

The enzyme catalyses GTP + H2O = 7,8-dihydroneopterin 3'-triphosphate + formate + H(+). It participates in cofactor biosynthesis; 7,8-dihydroneopterin triphosphate biosynthesis; 7,8-dihydroneopterin triphosphate from GTP: step 1/1. This Dehalococcoides mccartyi (strain ATCC BAA-2266 / KCTC 15142 / 195) (Dehalococcoides ethenogenes (strain 195)) protein is GTP cyclohydrolase 1.